Here is a 310-residue protein sequence, read N- to C-terminus: Vomeronasal type-1 receptor 93 (310 aa).

The Extracellular segment spans residues 1-20 (MNKDNTLHVDTIMKITMFSE). A helical transmembrane segment spans residues 21–41 (VSVGILANSILFFAHLCMLLG). Residues 42–59 (ENKPKPIHLYIASLSLTQ) are Cytoplasmic-facing. A helical transmembrane segment spans residues 60 to 80 (LMLLITMGLIAADMFISQGIW). At 81–93 (DSTSCQSLIYLHR) the chain is on the extracellular side. Cysteines 85 and 172 form a disulfide. The chain crosses the membrane as a helical span at residues 94–114 (LSRGFTLSAACLLNVFWMITL). At 115–134 (SSKKSRLTKFKHNSPHHISG) the chain is on the cytoplasmic side. The chain crosses the membrane as a helical span at residues 135–155 (AFLLLCVLYMCFSSHLILSII). Topologically, residues 156–193 (ATPNLTSDNFMYVTKSCSFLPMCYSRTSMFSTTIAVRE) are extracellular. N-linked (GlcNAc...) asparagine glycosylation occurs at Asn-159. A helical membrane pass occupies residues 194-214 (AFFIGLMALSSGYLVAFLWRH). At 215–238 (RKQAQHLHSTGLSSKASPEQRATE) the chain is on the cytoplasmic side. The helical transmembrane segment at 239-259 (TILLLMSFFVVLYILENVVFY) threads the bilayer. The Extracellular portion of the chain corresponds to 260 to 269 (SRMKFKDGST). Residues 270 to 290 (FYCVQIIVSHSYATVSSFVFI) traverse the membrane as a helical segment. Over 291 to 310 (FTEKRMTKILRSVCTRIINI) the chain is Cytoplasmic.

It belongs to the G-protein coupled receptor 1 family. In terms of tissue distribution, expressed in 1-4% of neurons of the vomeronasal organ. Only one pheromone receptor gene may be expressed in a particular neuron. Not expressed in the main olfactory epithelium.

It localises to the cell membrane. Functionally, putative pheromone receptor implicated in the regulation of social as well as reproductive behavior. The sequence is that of Vomeronasal type-1 receptor 93 (Vom1r93) from Rattus norvegicus (Rat).